A 109-amino-acid polypeptide reads, in one-letter code: Small ribosomal subunit protein eS25 (109 aa).

A compositionally biased stretch (basic and acidic residues) spans 1–13 (MVKKIQESKEKKA). The segment at 1-34 (MVKKIQESKEKKALKAASGTRKDKKKWGDGRKKE) is disordered.

It belongs to the eukaryotic ribosomal protein eS25 family.

The sequence is that of Small ribosomal subunit protein eS25 (RPS25-1) from Encephalitozoon cuniculi (strain GB-M1) (Microsporidian parasite).